Consider the following 660-residue polypeptide: ATP-dependent RNA helicase DDX18 (660 aa).

A disordered region spans residues 16–153; sequence RNAKLRQRNL…DVKKADDSEV (138 aa). The segment covering 25 to 40 has biased composition (polar residues); that stretch reads LKLQETSDTSLSQPQN. Residues 124-133 show a composition bias toward basic and acidic residues; the sequence is PDTKKAKTEE. A compositionally biased stretch (acidic residues) spans 134–143; the sequence is SAEACEEPED. The Q motif signature appears at 169–197; it reads FASLSNLVNENTLKAIEEMGFKRMTEIQH. Residues 200–375 enclose the Helicase ATP-binding domain; sequence IRPLLEGRDL…RISLKKEPLY (176 aa). 213–220 is an ATP binding site; sequence AKTGSGKT. Positions 323–326 match the DEAD box motif; it reads DEAD. The Helicase C-terminal domain occupies 389 to 559; sequence GLEQGYVVCP…DIQSQLEKLI (171 aa).

This sequence belongs to the DEAD box helicase family. DDX18/HAS1 subfamily. Interacts with NOL8; the interaction is RNA-dependent. Interacts with PRC2 complex components EZH2, SUZ2 and JARID2; these interactions prevent deposition of the repressive H3K27me3 mark onto rDNA in pluripotent cells.

The protein localises to the nucleus. It is found in the nucleolus. The protein resides in the chromosome. It carries out the reaction ATP + H2O = ADP + phosphate + H(+). Functionally, ATP-dependent RNA helicase that plays a role in the regulation of R-loop homeostasis in both endogenous R-loop-prone regions and at sites of DNA damage. At endogenous loci such as actively transcribed genes, may act as a helicase to resolve the formation of R-loop during transcription and prevent the interference of R-loop with DNA-replication machinery. Also participates in the removal of DNA-lesion-associated R-loop. Plays an essential role for establishing pluripotency during embryogenesis and for pluripotency maintenance in embryonic stem cells. Mechanistically, prevents the polycomb repressive complex 2 (PRC2) from accessing rDNA loci and protects the active chromatin status in nucleolus. This chain is ATP-dependent RNA helicase DDX18 (Ddx18), found in Mus musculus (Mouse).